The primary structure comprises 406 residues: ATP phosphoribosyltransferase regulatory subunit (406 aa).

This sequence belongs to the class-II aminoacyl-tRNA synthetase family. HisZ subfamily. In terms of assembly, heteromultimer composed of HisG and HisZ subunits.

Its subcellular location is the cytoplasm. It participates in amino-acid biosynthesis; L-histidine biosynthesis; L-histidine from 5-phospho-alpha-D-ribose 1-diphosphate: step 1/9. Required for the first step of histidine biosynthesis. May allow the feedback regulation of ATP phosphoribosyltransferase activity by histidine. The sequence is that of ATP phosphoribosyltransferase regulatory subunit from Methylococcus capsulatus (strain ATCC 33009 / NCIMB 11132 / Bath).